A 203-amino-acid chain; its full sequence is ATP synthase subunit delta, chloroplastic (203 aa).

The protein belongs to the ATPase delta chain family. In terms of assembly, F-type ATPases have 2 components, F(1) - the catalytic core - and F(0) - the membrane proton channel. F(1) has five subunits: alpha(3), beta(3), gamma(1), delta(1), epsilon(1). CF(0) has four main subunits: a(1), b(1), b'(1) and c(10-14). The alpha and beta chains form an alternating ring which encloses part of the gamma chain. F(1) is attached to F(0) by a central stalk formed by the gamma and epsilon chains, while a peripheral stalk is formed by the delta, b and b' chains.

The protein localises to the plastid. It localises to the chloroplast thylakoid membrane. Functionally, f(1)F(0) ATP synthase produces ATP from ADP in the presence of a proton or sodium gradient. F-type ATPases consist of two structural domains, F(1) containing the extramembraneous catalytic core and F(0) containing the membrane proton channel, linked together by a central stalk and a peripheral stalk. During catalysis, ATP synthesis in the catalytic domain of F(1) is coupled via a rotary mechanism of the central stalk subunits to proton translocation. This protein is part of the stalk that links CF(0) to CF(1). It either transmits conformational changes from CF(0) to CF(1) or is implicated in proton conduction. The polypeptide is ATP synthase subunit delta, chloroplastic (Heterosigma akashiwo (strain NIES-293 / 8280G21-1)).